Reading from the N-terminus, the 231-residue chain is Probable transglycosylase SceD (231 aa).

A signal peptide spans 1–27 (MKKTLLASSLAVGLGIVAGNAGHEAHA). The disordered stretch occupies residues 93 to 153 (SAQAPATNNV…ESKASEGSSV (61 aa)). Residues 96–116 (APATNNVAPSADQANQVQSQE) show a composition bias toward polar residues. The segment covering 119 to 137 (APQNAQTQQPQASTSNNSQ) has biased composition (low complexity). Polar residues predominate over residues 138 to 153 (VTATPTESKASEGSSV).

The protein belongs to the transglycosylase family. SceD subfamily.

It is found in the secreted. Functionally, is able to cleave peptidoglycan and affects clumping and separation of bacterial cells. The chain is Probable transglycosylase SceD (sceD) from Staphylococcus aureus (strain bovine RF122 / ET3-1).